We begin with the raw amino-acid sequence, 142 residues long: Extracellular globin-1 (142 aa).

The Globin domain maps to 1-142 (ECLVTEGLKV…DQIIDGIKDI (142 aa)). Cys-2 and Cys-131 are disulfide-bonded. Residue His-94 participates in heme b binding.

It belongs to the globin family. In terms of assembly, the extracellular hemoglobin of the earthworm consists of 12 subunits that have a hexagonal bilayer structure with a molecular weight near 3.8 million. Each one-twelfth subunit is composed primarily of disulfide linked trimers (chains A, B, and C) and monomers (chain D).

The chain is Extracellular globin-1 from Lumbricus terrestris (Common earthworm).